A 283-amino-acid chain; its full sequence is 4-diphosphocytidyl-2-C-methyl-D-erythritol kinase (283 aa).

Residue Lys10 is part of the active site. 99-109 (PMGGGLGGGSS) serves as a coordination point for ATP. Residue Asp141 is part of the active site.

This sequence belongs to the GHMP kinase family. IspE subfamily. In terms of assembly, homodimer.

It catalyses the reaction 4-CDP-2-C-methyl-D-erythritol + ATP = 4-CDP-2-C-methyl-D-erythritol 2-phosphate + ADP + H(+). It participates in isoprenoid biosynthesis; isopentenyl diphosphate biosynthesis via DXP pathway; isopentenyl diphosphate from 1-deoxy-D-xylulose 5-phosphate: step 3/6. Catalyzes the phosphorylation of the position 2 hydroxy group of 4-diphosphocytidyl-2C-methyl-D-erythritol. The polypeptide is 4-diphosphocytidyl-2-C-methyl-D-erythritol kinase (ispE) (Salmonella typhimurium (strain LT2 / SGSC1412 / ATCC 700720)).